Here is a 328-residue protein sequence, read N- to C-terminus: MIRFAVIGTNWITRQFVEAAHESGKYKLTAVYSRSLEQAQHFANDFSVEHLFTSLEAMAESDAIDAVYIASPNSLHFSQTQLFLSHKINVICEKPLASNLAEVDAAIACARENQVVLFEAFKTACLPNFHLLRQALPKVGKLRKVFFNYCQYSSRYQRYLDGENPNTFNPAFSNGSIMDIGFYCLASAVALFGEPKSVQATASLLASGVDAQGVVVMDYGDFSVTLQHSKVSDSVLASEIQGEAGSLVIEKLSECQKVCFVPRGSQMQDLTQPQHINTMLYEAELFATLVDEHLVDHPGLAVSRITAKLLTEIRRQTGVIFPADSVKL.

Belongs to the Gfo/Idh/MocA family.

This is an uncharacterized protein from Escherichia coli (strain K12).